We begin with the raw amino-acid sequence, 306 residues long: Ribokinase (306 aa).

Substrate contacts are provided by residues 12–14, 40–44, and glutamate 141; these read NAD and GKGAN. Residues asparagine 185 and 221-226 each bind ATP; that span reads TLGAKG. K(+)-binding residues include aspartate 247 and threonine 249. 252–253 serves as a coordination point for ATP; it reads GD. Position 253 (aspartate 253) interacts with substrate. The active-site Proton acceptor is the aspartate 253. Residues serine 283, lysine 286, glycine 288, and serine 292 each coordinate K(+).

Belongs to the carbohydrate kinase PfkB family. Ribokinase subfamily. Homodimer. It depends on Mg(2+) as a cofactor.

It is found in the cytoplasm. It catalyses the reaction D-ribose + ATP = D-ribose 5-phosphate + ADP + H(+). Its pathway is carbohydrate metabolism; D-ribose degradation; D-ribose 5-phosphate from beta-D-ribopyranose: step 2/2. With respect to regulation, activated by a monovalent cation that binds near, but not in, the active site. The most likely occupant of the site in vivo is potassium. Ion binding induces a conformational change that may alter substrate affinity. In terms of biological role, catalyzes the phosphorylation of ribose at O-5 in a reaction requiring ATP and magnesium. The resulting D-ribose-5-phosphate can then be used either for sythesis of nucleotides, histidine, and tryptophan, or as a component of the pentose phosphate pathway. The chain is Ribokinase from Haemophilus influenzae (strain ATCC 51907 / DSM 11121 / KW20 / Rd).